The sequence spans 116 residues: MESHSLTLDEACAFLKISRPTATNWIRTGRLQATRKDPTKPKSPYLTTRQACIAALQSPLHTVQVSAGDDITEELKCHYSAEVKPGTPVSHCRTAKDLSSLLGQRTKGRPQSFMTS.

Its function is as follows. Part of the excision complex necessary for the excision of prophage from the host genome by site-specific recombination at the att site. The polypeptide is Excisionase (xis) (Salmonella phage P22 (Bacteriophage P22)).